A 494-amino-acid polypeptide reads, in one-letter code: Guanosine-5'-triphosphate,3'-diphosphate pyrophosphatase (494 aa).

The protein belongs to the GppA/Ppx family. GppA subfamily.

It carries out the reaction guanosine 3'-diphosphate 5'-triphosphate + H2O = guanosine 3',5'-bis(diphosphate) + phosphate + H(+). It participates in purine metabolism; ppGpp biosynthesis; ppGpp from GTP: step 2/2. In terms of biological role, catalyzes the conversion of pppGpp to ppGpp. Guanosine pentaphosphate (pppGpp) is a cytoplasmic signaling molecule which together with ppGpp controls the 'stringent response', an adaptive process that allows bacteria to respond to amino acid starvation, resulting in the coordinated regulation of numerous cellular activities. The polypeptide is Guanosine-5'-triphosphate,3'-diphosphate pyrophosphatase (Cronobacter sakazakii (strain ATCC BAA-894) (Enterobacter sakazakii)).